Consider the following 246-residue polypeptide: Neurotrophic factor BDNF precursor form (246 aa).

The signal sequence occupies residues 1–18 (MTILFLTMVISYFSCMKA). Positions 19 to 127 (APMKEASVRG…AANMSMRVRR (109 aa)) are excised as a propeptide. Asn-120 carries N-linked (GlcNAc...) asparagine glycosylation. 3 disulfides stabilise this stretch: Cys-140/Cys-207, Cys-185/Cys-236, and Cys-195/Cys-238.

Belongs to the NGF-beta family.

The protein localises to the secreted. Its function is as follows. Important signaling molecule that activates signaling cascades downstream of NTRK2. During development, promotes the survival and differentiation of selected neuronal populations of the peripheral and central nervous systems. Participates in axonal growth, pathfinding and in the modulation of dendritic growth and morphology. Major regulator of synaptic transmission and plasticity at adult synapses in many regions of the CNS. The versatility of BDNF is emphasized by its contribution to a range of adaptive neuronal responses including long-term potentiation (LTP), long-term depression (LTD), certain forms of short-term synaptic plasticity, as well as homeostatic regulation of intrinsic neuronal excitability. The protein is Neurotrophic factor BDNF precursor form (BDNF) of Gallus gallus (Chicken).